A 583-amino-acid chain; its full sequence is Isocitrate dehydrogenase kinase/phosphatase (583 aa).

ATP contacts are provided by residues 315-321 (APGIRGM) and Lys-336. Asp-371 is a catalytic residue.

It belongs to the AceK family.

Its subcellular location is the cytoplasm. It catalyses the reaction L-seryl-[isocitrate dehydrogenase] + ATP = O-phospho-L-seryl-[isocitrate dehydrogenase] + ADP + H(+). Bifunctional enzyme which can phosphorylate or dephosphorylate isocitrate dehydrogenase (IDH) on a specific serine residue. This is a regulatory mechanism which enables bacteria to bypass the Krebs cycle via the glyoxylate shunt in response to the source of carbon. When bacteria are grown on glucose, IDH is fully active and unphosphorylated, but when grown on acetate or ethanol, the activity of IDH declines drastically concomitant with its phosphorylation. The sequence is that of Isocitrate dehydrogenase kinase/phosphatase from Salmonella dublin (strain CT_02021853).